Reading from the N-terminus, the 2483-residue chain is Cation-independent mannose-6-phosphate receptor (2483 aa).

Residues 1-35 form the signal peptide; that stretch reads MRAVQLGPVPSGPRVALLPPLLLLLLLAAAGSAQA. Topologically, residues 36 to 2295 are lumenal; the sequence is QAVDLDALCS…YKGLSERSQA (2260 aa). MRH domains lie at 42-158, 167-315, 321-463, 468-613, 619-755, 758-917, 925-1072, 1075-1212, and 1218-1356; these read ALCS…ACKK, VPCY…ACHR, ESCS…ACIK, LLCG…ACVL, ENCT…ACPE, LECM…ACPI, QACS…ACTP, VDCQ…ACPV, and DNCQ…ACPP. Intrachain disulfides connect Cys-44-Cys-64 and Cys-72-Cys-79. Asn-107 carries an N-linked (GlcNAc...) asparagine glycan. 8 cysteine pairs are disulfide-bonded: Cys-112–Cys-144, Cys-129–Cys-156, Cys-169–Cys-207, Cys-223–Cys-230, Cys-270–Cys-301, Cys-283–Cys-313, Cys-323–Cys-361, and Cys-369–Cys-377. 2 N-linked (GlcNAc...) asparagine glycosylation sites follow: Asn-395 and Asn-430. Cystine bridges form between Cys-415/Cys-449, Cys-429/Cys-461, Cys-470/Cys-513, and Cys-525/Cys-532. N-linked (GlcNAc...) asparagine glycans are attached at residues Asn-537 and Asn-575. 2 disulfide bridges follow: Cys-566/Cys-599 and Cys-580/Cys-611. Asn-620 is a glycosylation site (N-linked (GlcNAc...) asparagine). 5 cysteine pairs are disulfide-bonded: Cys-621–Cys-658, Cys-666–Cys-673, Cys-724–Cys-753, Cys-760–Cys-807, and Cys-816–Cys-823. An N-linked (GlcNAc...) asparagine glycan is attached at Asn-740. The N-linked (GlcNAc...) asparagine glycan is linked to Asn-864. Intrachain disulfides connect Cys-868-Cys-903, Cys-886-Cys-915, Cys-927-Cys-964, Cys-970-Cys-981, Cys-1035-Cys-1070, Cys-1077-Cys-1118, and Cys-1127-Cys-1135. N-linked (GlcNAc...) asparagine glycosylation occurs at Asn-944. Residue Asn-1157 is glycosylated (N-linked (GlcNAc...) asparagine). 4 disulfide bridges follow: Cys-1170–Cys-1198, Cys-1183–Cys-1210, Cys-1220–Cys-1255, and Cys-1263–Cys-1275. An N-linked (GlcNAc...) asparagine glycan is attached at Asn-1239. Asn-1305 carries N-linked (GlcNAc...) asparagine glycosylation. 2 disulfide bridges follow: Cys-1312/Cys-1342 and Cys-1326/Cys-1354. The N-linked (GlcNAc...) asparagine glycan is linked to Asn-1358. 6 consecutive MRH domains span residues 1360–1501, 1507–1641, 1643–1790, 1795–1982, 1985–2120, and 2128–2273; these read TECS…ACPV, DDCQ…ACEQ, TECT…VCPD, QGCA…VCPP, MECK…ACAV, and VNGT…VCPL. 2 disulfide bridges follow: Cys-1362-Cys-1401 and Cys-1413-Cys-1420. Residue Asn-1423 is glycosylated (N-linked (GlcNAc...) asparagine). Cystine bridges form between Cys-1454/Cys-1487, Cys-1469/Cys-1499, Cys-1509/Cys-1546, Cys-1552/Cys-1559, Cys-1591/Cys-1627, Cys-1607/Cys-1639, Cys-1645/Cys-1688, Cys-1699/Cys-1706, Cys-1743/Cys-1776, Cys-1759/Cys-1788, Cys-1797/Cys-1832, Cys-1843/Cys-1849, Cys-1886/Cys-1968, Cys-1896/Cys-1920, Cys-1910/Cys-1935, Cys-1950/Cys-1980, Cys-1987/Cys-2022, Cys-2032/Cys-2039, Cys-2075/Cys-2106, and Cys-2089/Cys-2118. N-linked (GlcNAc...) asparagine glycosylation is present at Asn-1532. Asn-1649 carries an N-linked (GlcNAc...) asparagine glycan. A glycan (N-linked (GlcNAc...) asparagine) is linked at Asn-1750. Asn-1809 is a glycosylation site (N-linked (GlcNAc...) asparagine). The Fibronectin type-II domain occupies 1891–1937; that stretch reads DDGEPCVFPFIYKGKSYDECVLEGRAKLWCSKTANYDRDHEWGFCRQ. Asn-2078 carries an N-linked (GlcNAc...) asparagine glycan. A glycan (N-linked (GlcNAc...) asparagine) is linked at Asn-2129. 3 disulfides stabilise this stretch: Cys-2181–Cys-2187, Cys-2225–Cys-2259, and Cys-2241–Cys-2271. The helical transmembrane segment at 2296–2316 threads the bilayer; that stretch reads VGAVLSLLLVALTGCLLALLL. The Cytoplasmic portion of the chain corresponds to 2317-2483; the sequence is HKKERRETVI…DDSDEDLLHI (167 aa). N6-acetyllysine is present on Lys-2342. Phosphoserine is present on Ser-2401. A disordered region spans residues 2415-2483; it reads SGRGAEVESS…DDSDEDLLHI (69 aa). Arg-2417 carries the post-translational modification Omega-N-methylarginine. 2 stretches are compositionally biased toward basic and acidic residues: residues 2434-2451 and 2471-2483; these read VLKE…GEKA and SFHD…LLHI. Ser-2471 and Ser-2476 each carry phosphoserine.

The protein belongs to the MRL1/IGF2R family. As to quaternary structure, binds HA-I and HA-II plasma membrane adapters. Interacts with DPP4; the interaction is direct. Binds GGA1, GGA2 and GGA3. Interacts with the heterotrimeric retromer cargo-selective complex (CSC), formed by VPS26 (VPS26A or VPS26B), VPS29 and VPS35; which is involved in retrograde trafficking of the receptor from endosomes to the Golgi apparatus. Post-translationally, palmitoylated. Undergoes cysteine S-palmitoylation which promotes interaction with the retromer cargo-selective complex which mediates its retrograde trafficking to the Golgi apparatus.

It is found in the golgi apparatus membrane. Its subcellular location is the endosome membrane. Its function is as follows. Mediates the transport of phosphorylated lysosomal enzymes from the Golgi complex and the cell surface to lysosomes. Lysosomal enzymes bearing phosphomannosyl residues bind specifically to mannose-6-phosphate receptors in the Golgi apparatus and the resulting receptor-ligand complex is transported to an acidic prelysosomal compartment where the low pH mediates the dissociation of the complex. The receptor is then recycled back to the Golgi for another round of trafficking through its binding to the retromer. This receptor also binds IGF2. Acts as a positive regulator of T-cell coactivation by binding DPP4. This Mus musculus (Mouse) protein is Cation-independent mannose-6-phosphate receptor (Igf2r).